Consider the following 336-residue polypeptide: Cytochrome P450 monooxygenase lcsN (336 aa).

Cys-271 serves as a coordination point for heme.

The protein belongs to the cytochrome P450 family. Heme is required as a cofactor.

It functions in the pathway secondary metabolite biosynthesis. Functionally, cytochrome P450 monooxygenase; part of the gene cluster that mediates the biosynthesis of the lipopeptide antibiotics leucinostatins that show extensive biological activities, including antimalarial, antiviral, antibacterial, antifungal, and antitumor activities, as well as phytotoxic. Leucinostatin A contains nine amino acid residues, including the unusual amino acid 4-methyl-L-proline (MePro), 2-amino-6-hydroxy-4-methyl-8-oxodecanoic acid (AHyMeOA), 3-hydroxyleucine (HyLeu), alpha-aminoisobutyric acid (AIB), beta-Ala, a 4-methylhex-2-enoic acid at the N-terminus as well as a N1,N1-dimethylpropane-1,2-diamine (DPD) at the C-terminus. The biosynthesis of leucinostatins is probably initiated with the assembly of 4-methylhex-2-enoic acid by a reducing PKS. Two reducing polyketide synthases, lcsB and lcsC, have been identified in the cluster and it is not clear which is the one that assembles 4-methylhex-2-enoic acid since both contain KS, AT, DH, cMT, ER, KR and ACP domains. The polyketide residue might be transferred to the NRPS lcsA, mediated by two additional enzymes, the acyl-CoA ligase lcsD and the thioesterase lcsE. The linear polyketide carboxylic acid, which is released from PKS, is converted to a CoA thioester by lcsD, and then lcsE hydrolyzes the thiol bond and shuttles the polyketide intermediate to lcsA. The C domain of the first module catalyzed the condensation of 4-methylhex-2-enoic acid and MePro carried by domain A1, followed by successive condensations of nine amino acids to trigger the elongation of the linear peptide. A5 and A6 domains of lcsA are proposed to incorporate leucine, A2 AHyMeOA, and A3 incorporates HyLeu. A4, A7 and A8 incorporate AIB. The AHyMeOA in leucinostatin A activated by the A2 might be produced by the second PKS (lcsB or lcsC) present within the cluster. The MePro is probably produced via leucine cyclization and may originate from a separate pathway, independent of the cluster. Another nonproteinogenic amino acid, beta-Ala, could be produced by an aspartic acid decarboxylase also localized outside of the cluster. Two candidates are VFPBJ_01400 and VFPBJ_10476. The final peptide scaffold may be released by the NAD(P)H-dependent thioester reductase (TE) at the C-terminal region of lcsA. Transamination of the lcsA product by the transaminase lcsP may produce DPD at the C-terminus. Further hydroxylation steps performed alternatively by the cytochrome P450 monooxygenases lcsI, lcsK and lcsN then yield the non-methylated leucinostatins precursor. It is also possible that leucines can be hydroxylated prior to their incorporation into the peptide. Varying extents of methylation then lead to the formation of leucinostatins A and B. This Purpureocillium lilacinum (Paecilomyces lilacinus) protein is Cytochrome P450 monooxygenase lcsN.